The chain runs to 312 residues: Methionyl-tRNA formyltransferase (312 aa).

Ser109 to Pro112 is a (6S)-5,6,7,8-tetrahydrofolate binding site.

This sequence belongs to the Fmt family.

It catalyses the reaction L-methionyl-tRNA(fMet) + (6R)-10-formyltetrahydrofolate = N-formyl-L-methionyl-tRNA(fMet) + (6S)-5,6,7,8-tetrahydrofolate + H(+). Its function is as follows. Attaches a formyl group to the free amino group of methionyl-tRNA(fMet). The formyl group appears to play a dual role in the initiator identity of N-formylmethionyl-tRNA by promoting its recognition by IF2 and preventing the misappropriation of this tRNA by the elongation apparatus. In Listeria monocytogenes serotype 4b (strain CLIP80459), this protein is Methionyl-tRNA formyltransferase.